Here is a 198-residue protein sequence, read N- to C-terminus: MLQQIYDFLNINYNVSRETFNKFKEYYSLLSKWNSTINLVSATTLQNFWQRHIFDSIQLLNYIHNKDIIVADLGSGAGFPGVVLSISGIKNVILIESDSRKAAFLLQVAQLSDQKIEIINDRIQNLKVKCDIVTVRALANLSTILSHTKQFTVKDKYLILKGKNYQHEITQALLHNKFNYRLYKSCTDDSSWILEIKI.

S-adenosyl-L-methionine contacts are provided by residues Gly74, Phe79, 123 to 124, and Arg136; that span reads IQ.

Belongs to the methyltransferase superfamily. RNA methyltransferase RsmG family.

It is found in the cytoplasm. It catalyses the reaction guanosine(527) in 16S rRNA + S-adenosyl-L-methionine = N(7)-methylguanosine(527) in 16S rRNA + S-adenosyl-L-homocysteine. In terms of biological role, specifically methylates the N7 position of guanine in position 527 of 16S rRNA. The polypeptide is Ribosomal RNA small subunit methyltransferase G (Orientia tsutsugamushi (strain Ikeda) (Rickettsia tsutsugamushi)).